A 726-amino-acid chain; its full sequence is Dipeptidyl-peptidase 5 (726 aa).

An N-terminal signal peptide occupies residues 1–19 (MAAAKWLIASLAFASSGLA). N-linked (GlcNAc...) asparagine glycosylation is found at N96 and N252. Positions 269-291 (AEPINKRNGPRTPQGIEGASSSP) are disordered. The active-site Charge relay system is S558. N605 is a glycosylation site (N-linked (GlcNAc...) asparagine). Catalysis depends on charge relay system residues D641 and H673. N-linked (GlcNAc...) asparagine glycosylation is present at N699.

This sequence belongs to the peptidase S9C family.

It is found in the secreted. Functionally, extracellular dipeptidyl-peptidase which removes N-terminal dipeptides sequentially from polypeptides having unsubstituted N-termini. Contributes to pathogenicity. This is Dipeptidyl-peptidase 5 (DPP5) from Trichophyton tonsurans (Scalp ringworm fungus).